Here is a 677-residue protein sequence, read N- to C-terminus: Methionine--tRNA ligase (677 aa).

A 'HIGH' region motif is present at residues 15–25 (PYANGSIHLGH). The Zn(2+) site is built by C146, C149, C159, and C162. Residues 333-337 (KMSKS) carry the 'KMSKS' region motif. Residue K336 participates in ATP binding. The region spanning 575-677 (DFAKVDLRVA…DGAKPGQQVK (103 aa)) is the tRNA-binding domain.

The protein belongs to the class-I aminoacyl-tRNA synthetase family. MetG type 1 subfamily. In terms of assembly, homodimer. Zn(2+) serves as cofactor.

It is found in the cytoplasm. The catalysed reaction is tRNA(Met) + L-methionine + ATP = L-methionyl-tRNA(Met) + AMP + diphosphate. Is required not only for elongation of protein synthesis but also for the initiation of all mRNA translation through initiator tRNA(fMet) aminoacylation. The chain is Methionine--tRNA ligase from Salmonella schwarzengrund (strain CVM19633).